The primary structure comprises 445 residues: ATP-dependent protease ATPase subunit HslU (445 aa).

Residues V18, 60–65, D254, E319, and R391 each bind ATP; that span reads GVGKTE.

Belongs to the ClpX chaperone family. HslU subfamily. In terms of assembly, a double ring-shaped homohexamer of HslV is capped on each side by a ring-shaped HslU homohexamer. The assembly of the HslU/HslV complex is dependent on binding of ATP.

The protein localises to the cytoplasm. In terms of biological role, ATPase subunit of a proteasome-like degradation complex; this subunit has chaperone activity. The binding of ATP and its subsequent hydrolysis by HslU are essential for unfolding of protein substrates subsequently hydrolyzed by HslV. HslU recognizes the N-terminal part of its protein substrates and unfolds these before they are guided to HslV for hydrolysis. The protein is ATP-dependent protease ATPase subunit HslU of Alcanivorax borkumensis (strain ATCC 700651 / DSM 11573 / NCIMB 13689 / SK2).